A 336-amino-acid chain; its full sequence is Casein kinase I isoform beta (336 aa).

A Protein kinase domain is found at 17–285 (YKLVREIGFG…YLRQLFRLLF (269 aa)). Residues 23 to 31 (IGFGSFGHV) and Lys-46 contribute to the ATP site. Residue Asp-136 is the Proton acceptor of the active site. Residues 309 to 320 (ASSSSGEGQQAQ) are compositionally biased toward low complexity. The segment at 309–336 (ASSSSGEGQQAQTPTGKSDNTKSEMKHS) is disordered. Positions 327–336 (DNTKSEMKHS) are enriched in basic and acidic residues.

It belongs to the protein kinase superfamily. CK1 Ser/Thr protein kinase family. Casein kinase I subfamily. As to quaternary structure, monomer.

The protein localises to the cytoplasm. The catalysed reaction is L-seryl-[protein] + ATP = O-phospho-L-seryl-[protein] + ADP + H(+). It catalyses the reaction L-threonyl-[protein] + ATP = O-phospho-L-threonyl-[protein] + ADP + H(+). Casein kinases are operationally defined by their preferential utilization of acidic proteins such as caseins as substrates. It can phosphorylate a large number of proteins. Participates in Wnt signaling. The sequence is that of Casein kinase I isoform beta (CSNK1B) from Bos taurus (Bovine).